Reading from the N-terminus, the 879-residue chain is Translation initiation factor IF-2 (879 aa).

The tract at residues 48-261 (EAFPPPPEPA…RPHKSKKQRR (214 aa)) is disordered. The span at 82–111 (PAADAAAPPAVTTPPSAAPAGATTSAPSDA) shows a compositional bias: low complexity. 3 stretches are compositionally biased toward pro residues: residues 119–142 (PPRPVKLPQPPRPAPAVPKPPSGP), 152–163 (SPMPRPMPPRPV), and 173–197 (PGIPRPPLRPGAPGRPTPGAMPPRP). Over residues 198–213 (AAGRAAPGRGAPIRLP) the composition is skewed to low complexity. Gly residues predominate over residues 228–246 (PGVGGRGRGAPGGAFGRGP). The segment covering 251–260 (SRPHKSKKQR) has biased composition (basic residues). Residues 372–543 (PRPPVVTVMG…AILLTADAAL (172 aa)) enclose the tr-type G domain. Positions 381-388 (GHVDHGKT) are G1. GTP is bound at residue 381–388 (GHVDHGKT). Residues 406–410 (GITQH) form a G2 region. The segment at 431–434 (DTPG) is G3. GTP contacts are provided by residues 431–435 (DTPGH) and 485–488 (NKID). Positions 485-488 (NKID) are G4. The G5 stretch occupies residues 521–523 (SAL).

This sequence belongs to the TRAFAC class translation factor GTPase superfamily. Classic translation factor GTPase family. IF-2 subfamily.

The protein localises to the cytoplasm. In terms of biological role, one of the essential components for the initiation of protein synthesis. Protects formylmethionyl-tRNA from spontaneous hydrolysis and promotes its binding to the 30S ribosomal subunits. Also involved in the hydrolysis of GTP during the formation of the 70S ribosomal complex. This chain is Translation initiation factor IF-2, found in Acidothermus cellulolyticus (strain ATCC 43068 / DSM 8971 / 11B).